The sequence spans 106 residues: uncharacterized protein (106 aa).

This is an uncharacterized protein from Homo sapiens (Human).